We begin with the raw amino-acid sequence, 135 residues long: Lactoylglutathione lyase (135 aa).

The 125-residue stretch at 2-126 folds into the VOC domain; sequence RLLHTMLRVG…DGYKIELIEE (125 aa). His5 lines the Ni(2+) pocket. Arg9 is a binding site for substrate. Glu56 is a Ni(2+) binding site. Positions 60 and 74 each coordinate substrate. Positions 74 and 122 each coordinate Ni(2+). Catalysis depends on Glu122, which acts as the Proton donor/acceptor.

It belongs to the glyoxalase I family. As to quaternary structure, homodimer. The cofactor is Ni(2+).

The catalysed reaction is (R)-S-lactoylglutathione = methylglyoxal + glutathione. The protein operates within secondary metabolite metabolism; methylglyoxal degradation; (R)-lactate from methylglyoxal: step 1/2. Functionally, catalyzes the conversion of hemimercaptal, formed from methylglyoxal and glutathione, to S-lactoylglutathione. This chain is Lactoylglutathione lyase (gloA), found in Escherichia coli O157:H7.